A 390-amino-acid polypeptide reads, in one-letter code: Serpin B3 (390 aa).

M1 is subject to N-acetylmethionine.

It belongs to the serpin family. Ov-serpin subfamily. In terms of assembly, interacts with MAPK8/JNK1. In terms of tissue distribution, squamous cells. Expressed in some hepatocellular carcinoma (at protein level).

The protein localises to the cytoplasm. May act as a papain-like cysteine protease inhibitor to modulate the host immune response against tumor cells. Also functions as an inhibitor of UV-induced apoptosis via suppression of the activity of c-Jun NH(2)-terminal kinase (JNK1). This is Serpin B3 (SERPINB3) from Homo sapiens (Human).